Here is a 539-residue protein sequence, read N- to C-terminus: GMP synthase [glutamine-hydrolyzing] (539 aa).

The 196-residue stretch at 20 to 215 (TILILDFGSQ…AIEICHAKPN (196 aa)) folds into the Glutamine amidotransferase type-1 domain. Residue cysteine 96 is the Nucleophile of the active site. Catalysis depends on residues histidine 189 and glutamate 191. The 198-residue stretch at 216–413 (WSMENFVDKE…LGIEHSLVWR (198 aa)) folds into the GMPS ATP-PPase domain. Residue 244-250 (SGGVDST) coordinates ATP. Residues arginine 317, aspartate 475, lysine 531, and glutamate 537 each coordinate XMP.

Homodimer. Mg(2+) serves as cofactor.

It localises to the cytoplasm. The protein resides in the cytosol. It carries out the reaction XMP + L-glutamine + ATP + H2O = GMP + L-glutamate + AMP + diphosphate + 2 H(+). It participates in purine metabolism; GMP biosynthesis; GMP from XMP (L-Gln route): step 1/1. Functionally, catalyzes the conversion of xanthine monophosphate (XMP) to GMP in the presence of glutamine and ATP through an adenyl-XMP intermediate. The chain is GMP synthase [glutamine-hydrolyzing] from Schizosaccharomyces pombe (strain 972 / ATCC 24843) (Fission yeast).